The sequence spans 447 residues: NADH peroxidase (447 aa).

Residues Gly7–Gly11, Glu32, Cys42, Ser110–Ala113, and Arg132 contribute to the FAD site. The active-site Proton acceptor is the His10. Residue Cys42 is the Redox-active of the active site. Cys42 is modified (cysteine sulfenic acid (-SOH)). 4 residues coordinate NAD(+): Ile160, Asp179, Tyr188, and Gly243. Residue Asp281 participates in FAD binding. Ala297 is a binding site for NAD(+). An FAD-binding site is contributed by Ala299. NAD(+) is bound at residue Gly328.

It belongs to the class-III pyridine nucleotide-disulfide oxidoreductase family. Homotetramer. It depends on FAD as a cofactor.

It carries out the reaction H2O2 + NADH + H(+) = NAD(+) + 2 H2O. In terms of biological role, peroxidase whose active site is a redox-active cysteine-sulfenic acid. The sequence is that of NADH peroxidase (npr) from Enterococcus faecalis (strain ATCC 700802 / V583).